The primary structure comprises 880 residues: Chaperone protein ClpB 1 (880 aa).

Residues 6–148 enclose the Clp R domain; the sequence is PNKFTDKAWE…EASIKAVRGS (143 aa). Repeat stretches follow at residues 9–74 and 85–148; these read FTDK…TQRQ and LGRS…VRGS. The NBD1 stretch occupies residues 161–343; that stretch reads EALQKFGRDL…RRFQQVYVDQ (183 aa). 208-215 provides a ligand contact to ATP; sequence GEPGVGKT. Positions 344–554 are linker; the sequence is PSVENTISIL…IAEIVAKWTG (211 aa). Positions 394–530 form a coiled coil; that stretch reads IDLVDEAAAQ…KEAKLLELQS (137 aa). Residues 564-775 are NBD2; it reads ERQKLLQLES…RVDDTILFHA (212 aa). ATP is bound at residue 614–621; the sequence is GPTGVGKT. Positions 776 to 880 are C-terminal; the sequence is LSRSEMSHII…VKVSVTQITT (105 aa).

It belongs to the ClpA/ClpB family. Homohexamer. The oligomerization is ATP-dependent.

It localises to the cytoplasm. Part of a stress-induced multi-chaperone system, it is involved in the recovery of the cell from heat-induced damage, in cooperation with DnaK, DnaJ and GrpE. Acts before DnaK, in the processing of protein aggregates. Protein binding stimulates the ATPase activity; ATP hydrolysis unfolds the denatured protein aggregates, which probably helps expose new hydrophobic binding sites on the surface of ClpB-bound aggregates, contributing to the solubilization and refolding of denatured protein aggregates by DnaK. The polypeptide is Chaperone protein ClpB 1 (clpB1) (Nostoc sp. (strain PCC 7120 / SAG 25.82 / UTEX 2576)).